A 447-amino-acid polypeptide reads, in one-letter code: Exodeoxyribonuclease 7 large subunit (447 aa).

The protein belongs to the XseA family. Heterooligomer composed of large and small subunits.

The protein resides in the cytoplasm. The catalysed reaction is Exonucleolytic cleavage in either 5'- to 3'- or 3'- to 5'-direction to yield nucleoside 5'-phosphates.. Functionally, bidirectionally degrades single-stranded DNA into large acid-insoluble oligonucleotides, which are then degraded further into small acid-soluble oligonucleotides. This is Exodeoxyribonuclease 7 large subunit from Streptococcus mutans serotype c (strain ATCC 700610 / UA159).